Consider the following 30-residue polypeptide: GIPCAESCVWIPCTVTALLGCSCSNNVCYN.

The segment at residues 1-30 (GIPCAESCVWIPCTVTALLGCSCSNNVCYN) is a cross-link (cyclopeptide (Gly-Asn)). Intrachain disulfides connect cysteine 4-cysteine 21, cysteine 8-cysteine 23, and cysteine 13-cysteine 28.

In terms of processing, this is a cyclic peptide.

Probably participates in a plant defense mechanism. Has potent hemolytic activity. This is Cycloviolacin-H4 from Viola hederacea (Australian violet).